The chain runs to 565 residues: NAD-dependent malic enzyme (565 aa).

Y104 functions as the Proton donor in the catalytic mechanism. NAD(+) is bound at residue R157. The active-site Proton acceptor is K175. The a divalent metal cation site is built by E246, D247, and D270. Residues D270 and N418 each coordinate NAD(+).

This sequence belongs to the malic enzymes family. In terms of assembly, homotetramer. Requires Mg(2+) as cofactor. It depends on Mn(2+) as a cofactor.

It carries out the reaction (S)-malate + NAD(+) = pyruvate + CO2 + NADH. The catalysed reaction is oxaloacetate + H(+) = pyruvate + CO2. The sequence is that of NAD-dependent malic enzyme from Edwardsiella ictaluri (strain 93-146).